The chain runs to 289 residues: Shikimate dehydrogenase (NADP(+)) (289 aa).

Shikimate is bound by residues 22–24 (SRS) and Thr69. Lys73 serves as the catalytic Proton acceptor. NADP(+) is bound at residue Glu85. Residues Asn94 and Asp109 each coordinate shikimate. NADP(+) is bound by residues 134 to 138 (GAGGA), 158 to 163 (NRTLSR), and Ile226. Tyr228 is a shikimate binding site. An NADP(+)-binding site is contributed by Gly249.

This sequence belongs to the shikimate dehydrogenase family. In terms of assembly, homodimer.

It carries out the reaction shikimate + NADP(+) = 3-dehydroshikimate + NADPH + H(+). The protein operates within metabolic intermediate biosynthesis; chorismate biosynthesis; chorismate from D-erythrose 4-phosphate and phosphoenolpyruvate: step 4/7. In terms of biological role, involved in the biosynthesis of the chorismate, which leads to the biosynthesis of aromatic amino acids. Catalyzes the reversible NADPH linked reduction of 3-dehydroshikimate (DHSA) to yield shikimate (SA). This is Shikimate dehydrogenase (NADP(+)) from Brucella canis (strain ATCC 23365 / NCTC 10854 / RM-666).